We begin with the raw amino-acid sequence, 154 residues long: Interleukin-2 (154 aa).

Residues 1 to 20 form the signal peptide; that stretch reads MYKIQLLSCIALTLILVTNS. Cys-78 and Cys-126 form a disulfide bridge. Residue Asn-111 is glycosylated (N-linked (GlcNAc...) asparagine).

Belongs to the IL-2 family.

The protein resides in the secreted. Functionally, cytokine produced by activated CD4-positive helper T-cells and to a lesser extend activated CD8-positive T-cells and natural killer (NK) cells that plays pivotal roles in the immune response and tolerance. Binds to a receptor complex composed of either the high-affinity trimeric IL-2R (IL2RA/CD25, IL2RB/CD122 and IL2RG/CD132) or the low-affinity dimeric IL-2R (IL2RB and IL2RG). Interaction with the receptor leads to oligomerization and conformation changes in the IL-2R subunits resulting in downstream signaling starting with phosphorylation of JAK1 and JAK3. In turn, JAK1 and JAK3 phosphorylate the receptor to form a docking site leading to the phosphorylation of several substrates including STAT5. This process leads to activation of several pathways including STAT, phosphoinositide-3-kinase/PI3K and mitogen-activated protein kinase/MAPK pathways. Functions as a T-cell growth factor and can increase NK-cell cytolytic activity as well. Promotes strong proliferation of activated B-cells and subsequently immunoglobulin production. Plays a pivotal role in regulating the adaptive immune system by controlling the survival and proliferation of regulatory T-cells, which are required for the maintenance of immune tolerance. Moreover, participates in the differentiation and homeostasis of effector T-cell subsets, including Th1, Th2, Th17 as well as memory CD8-positive T-cells. The protein is Interleukin-2 (IL2) of Felis catus (Cat).